Consider the following 254-residue polypeptide: 3-dehydroquinate dehydratase (254 aa).

3-dehydroquinate-binding positions include 47 to 49 and Arg83; that span reads EFR. His144 acts as the Proton donor/acceptor in catalysis. The active-site Schiff-base intermediate with substrate is Lys171. 3-dehydroquinate-binding residues include Arg213, Ser232, and Gln236.

It belongs to the type-I 3-dehydroquinase family. In terms of assembly, homodimer.

The catalysed reaction is 3-dehydroquinate = 3-dehydroshikimate + H2O. It participates in metabolic intermediate biosynthesis; chorismate biosynthesis; chorismate from D-erythrose 4-phosphate and phosphoenolpyruvate: step 3/7. Its function is as follows. Involved in the third step of the chorismate pathway, which leads to the biosynthesis of aromatic amino acids. Catalyzes the cis-dehydration of 3-dehydroquinate (DHQ) and introduces the first double bond of the aromatic ring to yield 3-dehydroshikimate. The sequence is that of 3-dehydroquinate dehydratase from Neisseria gonorrhoeae (strain ATCC 700825 / FA 1090).